Here is a 270-residue protein sequence, read N- to C-terminus: MEEMALAQQVPNLGLARFSVQDKSILITGATGSLGRVAARALADAGARLTLAGGNSAGLAELVNGAGIDDAAVVTCRPDSLADAQQMVEAALGRYGRLDGVLVASGSNHVAPITEMAVEDFDAVMDANVRGAWLVCRAAGRVLLEQGQGGSVVLVSSVRGGLGNAAGYSAYCPSKAGTDLLAKTLAAEWGGHGIRVNALAPTVFRSAVTEWMFTDDPKGRATREAMLARIPLRRFAEPEDFVGALIYLLSDASSFYTGQVMYLDGGYTAC.

An NADP(+)-binding site is contributed by 30–55 (ATGSLGRVAARALADAGARLTLAGGN). A substrate-binding site is contributed by Ser-157. The active-site Proton acceptor is Tyr-171.

Belongs to the short-chain dehydrogenases/reductases (SDR) family.

This is an uncharacterized protein from Mycobacterium tuberculosis (strain CDC 1551 / Oshkosh).